The sequence spans 483 residues: Threonine synthase-like 2 (483 aa).

Lys113 carries the post-translational modification N6-(pyridoxal phosphate)lysine.

It belongs to the threonine synthase family. Pyridoxal 5'-phosphate is required as a cofactor.

Its function is as follows. Acts as a catabolic phospho-lyase on both gamma- and beta-phosphorylated substrates. Degrades O-phospho-threonine (PThr) to alpha-ketobutyrate, ammonia and phosphate. Also degrades O-phospho-homoserine (PHS), but this is not its physiological substrate. The protein is Threonine synthase-like 2 (Thnsl2) of Mus musculus (Mouse).